The primary structure comprises 673 residues: MDRSWAERRIPELIETIRHHEYLYYVKNEPEISDAAFDELMQELKQLEEAFPDLRRPDSPTQRVGGATAPDFAKVPHQPPMYSLDNAFSEADLRDFDRRVREGLGGEPVSYVCELKIDGLSISLRYEDGLFVQGATRGDGETGEDVTENLRTIGSIPLRLDGTEAPVPPRLIVRGEVYMTKQVLEELNAALAAEGKPLLQNPRNAAAGGLRQKDPRKTRERRLDAFLYQVVDAEALGIADHWSALQRLQAWRFKVNPHRHLAHTIDEVLDWVAGWQARRHELPYEIDGLVIKVNDLAQQRRLGFTSKFPRWAIAYKFPAEERETTVVGISLEVGRTGVVTPSADLAPVRIAGTTVKRATLHNEDYIREKDIRVGDTVIVRKAGEIIPEVVRVVPEKRPPDAQPWTFPKTCPACGAELVRIEGEAATRCTNNLCPAQQYRAILHFASRDAMNIEGLGEALVQSLLDHGLIEDAADLYRLHEKRDALIRLERMGEKSVDNLLAAIDATRQNPLHRLIFALGIRHVGERAARLLADHFGSMEAIEQAGLDELTAIPGLGPKIAESVKNYFASPRSHQLLAKLRAAGVNMVGEKKAGPAEGPLAGMTVVVTGTLVRWSRKEIEELIQQLGGKAAGSVSRKTSFVVAGEAAGSKLQKAQELGIPVLTEDEFCERYLQG.

Position 34–38 (34–38 (DAAFD)) interacts with NAD(+). Residues 54-73 (LRRPDSPTQRVGGATAPDFA) are disordered. NAD(+) contacts are provided by residues 83-84 (SL) and glutamate 114. Lysine 116 (N6-AMP-lysine intermediate) is an active-site residue. NAD(+) contacts are provided by arginine 137, glutamate 176, lysine 292, and lysine 316. The Zn(2+) site is built by cysteine 410, cysteine 413, cysteine 428, and cysteine 433. The BRCT domain occupies 594 to 673 (PAEGPLAGMT…DEFCERYLQG (80 aa)).

It belongs to the NAD-dependent DNA ligase family. LigA subfamily. Requires Mg(2+) as cofactor. The cofactor is Mn(2+).

The enzyme catalyses NAD(+) + (deoxyribonucleotide)n-3'-hydroxyl + 5'-phospho-(deoxyribonucleotide)m = (deoxyribonucleotide)n+m + AMP + beta-nicotinamide D-nucleotide.. Functionally, DNA ligase that catalyzes the formation of phosphodiester linkages between 5'-phosphoryl and 3'-hydroxyl groups in double-stranded DNA using NAD as a coenzyme and as the energy source for the reaction. It is essential for DNA replication and repair of damaged DNA. This Symbiobacterium thermophilum (strain DSM 24528 / JCM 14929 / IAM 14863 / T) protein is DNA ligase.